A 429-amino-acid chain; its full sequence is Ribosomal RNA small subunit methyltransferase B (429 aa).

S-adenosyl-L-methionine-binding positions include Cys254 to Lys260, Asp277, Asp303, and Asp322. Cys375 (nucleophile) is an active-site residue.

Belongs to the class I-like SAM-binding methyltransferase superfamily. RsmB/NOP family.

The protein resides in the cytoplasm. The catalysed reaction is cytidine(967) in 16S rRNA + S-adenosyl-L-methionine = 5-methylcytidine(967) in 16S rRNA + S-adenosyl-L-homocysteine + H(+). In terms of biological role, specifically methylates the cytosine at position 967 (m5C967) of 16S rRNA. The protein is Ribosomal RNA small subunit methyltransferase B of Escherichia coli (strain SMS-3-5 / SECEC).